The primary structure comprises 192 residues: MAPEPKLRPTGLPSQEQVKELLDGEFARAGYEIENVVIDGGARPPRITVVVDGDRPLDLDTVASLSRSASEQLDRVDESGPGVTADAATYVLEVTSPGVDRPLTTEKHYRRARGRKVELTLSDGSQLTGRIGALTADGESVSLVVREGARANFSVRELPLEGIVKAVVQVEFSPPSQRELELTGQPREEAGA.

It belongs to the RimP family.

The protein resides in the cytoplasm. In terms of biological role, required for maturation of 30S ribosomal subunits. This is Ribosome maturation factor RimP from Mycobacterium sp. (strain JLS).